We begin with the raw amino-acid sequence, 117 residues long: Replication initiation control protein YabA (117 aa).

The tract at residues 45-81 is disordered; the sequence is NQHLRERLDQSDRDKSSETENDSAQKPGHSDIGEGHD. Composition is skewed to basic and acidic residues over residues 46 to 62 and 72 to 81; these read QHLR…KSSE and GHSDIGEGHD. Residues His92, Cys94, Cys107, and Cys110 each contribute to the Zn(2+) site.

The protein belongs to the YabA family. As to quaternary structure, homotetramer. Interacts with both DnaA and DnaN, acting as a bridge between these two proteins. Requires Zn(2+) as cofactor.

It localises to the cytoplasm. The protein localises to the nucleoid. Functionally, involved in control of chromosome replication initiation. Inhibits the cooperative binding of DnaA to the oriC region, thus negatively regulating initiation of chromosome replication. Inhibits the ability of DnaA-ATP to form a helix on DNA; does not disassemble preformed DnaA-DNA helices. Decreases the residence time of DnaA on the chromosome at its binding sites (oriC, replication forks and promoter-binding sites). Tethers DnaA to the replication machinery via the DNA polymerase beta sliding clamp subunit (dnaN). Associates with oriC and other DnaA targets on the chromosome in a DnaA-dependent manner. This is Replication initiation control protein YabA from Bacillus pumilus (strain SAFR-032).